A 140-amino-acid polypeptide reads, in one-letter code: Putative pre-16S rRNA nuclease (140 aa).

It belongs to the YqgF nuclease family.

It localises to the cytoplasm. Functionally, could be a nuclease involved in processing of the 5'-end of pre-16S rRNA. This is Putative pre-16S rRNA nuclease from Yersinia pseudotuberculosis serotype O:1b (strain IP 31758).